We begin with the raw amino-acid sequence, 150 residues long: UPF0179 protein Mbur_1033 (150 aa).

Belongs to the UPF0179 family.

The polypeptide is UPF0179 protein Mbur_1033 (Methanococcoides burtonii (strain DSM 6242 / NBRC 107633 / OCM 468 / ACE-M)).